Here is a 71-residue protein sequence, read N- to C-terminus: DNA gyrase inhibitor YacG (71 aa).

The Zn(2+) site is built by C9, C12, C28, and C32. Residues 43–71 (EEKRIPSQSESNDSDEWSEMPEQDPKPFN) form a disordered region. The segment covering 54–64 (NDSDEWSEMPE) has biased composition (acidic residues).

It belongs to the DNA gyrase inhibitor YacG family. Interacts with GyrB. It depends on Zn(2+) as a cofactor.

In terms of biological role, inhibits all the catalytic activities of DNA gyrase by preventing its interaction with DNA. Acts by binding directly to the C-terminal domain of GyrB, which probably disrupts DNA binding by the gyrase. This chain is DNA gyrase inhibitor YacG, found in Proteus mirabilis (strain HI4320).